The sequence spans 90 residues: FDVPEPFKWVDHFFYEKLDEQHKGLFFAFFDWGKGPDYWGKDTISLSQEQVDAKFELDLEYGIFYGNGETIENPSENGDLQGIFFSWGSE.

The protein localises to the secreted. Potent anticoagulant inhibiting the amidolytic activity of factor Xa (F10) (Ki=4nM) and reducing its ability to activate prothrombin (F2) in the prothrombinase complex (EC(50)=40nM). The chain is Leech factor Xa inhibitor from Haementeria depressa (Leech).